A 668-amino-acid chain; its full sequence is UvrABC system protein C (668 aa).

The region spanning 14-91 is the GIY-YIG domain; that stretch reads DSPGCYLHKD…IQRYKPKYNI (78 aa). The UVR domain maps to 196 to 231; that stretch reads KKIVNELEAKMMVSSDNMEFEQAAEYRDVIKAIGTL.

This sequence belongs to the UvrC family. As to quaternary structure, interacts with UvrB in an incision complex.

The protein localises to the cytoplasm. In terms of biological role, the UvrABC repair system catalyzes the recognition and processing of DNA lesions. UvrC both incises the 5' and 3' sides of the lesion. The N-terminal half is responsible for the 3' incision and the C-terminal half is responsible for the 5' incision. This chain is UvrABC system protein C, found in Lactococcus lactis subsp. lactis (strain IL1403) (Streptococcus lactis).